Consider the following 161-residue polypeptide: DNA-directed RNA polymerase 18 kDa subunit (161 aa).

The protein belongs to the poxviridae DNA-directed RNA polymerase 18 kDa subunit family. In terms of assembly, the DNA-dependent RNA polymerase used for intermediate and late genes expression consists of eight subunits Rpo30/OPG66, Rpo7/OPG90, Rpo22/OPG103, Rpo147/OPG105, Rpo18/OPG119, Rpo19/OPG131, Rpo132/OPG151 and Rpo35/OPG156. The same holoenzyme, with the addition of the transcription-specificity factor OPG109, is used for early gene expression. Apparently non-glycosylated.

The protein localises to the virion. It carries out the reaction RNA(n) + a ribonucleoside 5'-triphosphate = RNA(n+1) + diphosphate. In terms of biological role, part of the DNA-dependent RNA polymerase which catalyzes the transcription of viral DNA into RNA using the four ribonucleoside triphosphates as substrates. Responsible for the transcription of early, intermediate and late genes. DNA-dependent RNA polymerase associates with the early transcription factor (ETF), itself composed of OPG118 and OPG133, thereby allowing the early genes transcription. Late transcription, and probably also intermediate transcription, require newly synthesized RNA polymerase. This Cynomys gunnisoni (Gunnison's prairie dog) protein is DNA-directed RNA polymerase 18 kDa subunit (OPG119).